The sequence spans 81 residues: Photosystem I iron-sulfur center (81 aa).

2 4Fe-4S ferredoxin-type domains span residues Ser2–Trp31 and Ile39–Tyr68. Residues Cys11, Cys14, Cys17, Cys21, Cys48, Cys51, Cys54, and Cys58 each contribute to the [4Fe-4S] cluster site.

The eukaryotic PSI reaction center is composed of at least 11 subunits. It depends on [4Fe-4S] cluster as a cofactor.

Its subcellular location is the plastid. The protein localises to the chloroplast thylakoid membrane. It catalyses the reaction reduced [plastocyanin] + hnu + oxidized [2Fe-2S]-[ferredoxin] = oxidized [plastocyanin] + reduced [2Fe-2S]-[ferredoxin]. Functionally, apoprotein for the two 4Fe-4S centers FA and FB of photosystem I (PSI); essential for photochemical activity. FB is the terminal electron acceptor of PSI, donating electrons to ferredoxin. The C-terminus interacts with PsaA/B/D and helps assemble the protein into the PSI complex. Required for binding of PsaD and PsaE to PSI. PSI is a plastocyanin-ferredoxin oxidoreductase, converting photonic excitation into a charge separation, which transfers an electron from the donor P700 chlorophyll pair to the spectroscopically characterized acceptors A0, A1, FX, FA and FB in turn. The protein is Photosystem I iron-sulfur center of Liriodendron tulipifera (Tuliptree).